The sequence spans 419 residues: eIF5-mimic protein 2 (419 aa).

Met1 carries the post-translational modification N-acetylmethionine. Residues 1 to 15 are compositionally biased toward polar residues; that stretch reads MNNQKQQKPTLSGQR. The disordered stretch occupies residues 1-26; it reads MNNQKQQKPTLSGQRFKTRKRDEKER. Ser12 is subject to Phosphoserine. The W2 domain maps to 247–414; that stretch reads NQQTIGARKE…KNAEEESESE (168 aa). Residue Lys368 forms a Glycyl lysine isopeptide (Lys-Gly) (interchain with G-Cter in SUMO2) linkage. A phosphoserine mark is found at Ser411 and Ser413.

Belongs to the BZW family.

In terms of biological role, translation initiation regulator which represses repeat-associated non-AUG (RAN) initiated translation probably by acting as a competitive inhibitor of eukaryotic translation initiation factor 5 (EIF5) function. Enhances histone H4 gene transcription but does not seem to bind DNA directly. This Homo sapiens (Human) protein is eIF5-mimic protein 2 (BZW1).